The following is a 299-amino-acid chain: tRNA dimethylallyltransferase (299 aa).

13-20 lines the ATP pocket; the sequence is GPTASGKT. 15 to 20 is a binding site for substrate; that stretch reads TASGKT. The interaction with substrate tRNA stretch occupies residues 38–41; sequence DSRQ.

This sequence belongs to the IPP transferase family. Monomer. Mg(2+) serves as cofactor.

The enzyme catalyses adenosine(37) in tRNA + dimethylallyl diphosphate = N(6)-dimethylallyladenosine(37) in tRNA + diphosphate. Functionally, catalyzes the transfer of a dimethylallyl group onto the adenine at position 37 in tRNAs that read codons beginning with uridine, leading to the formation of N6-(dimethylallyl)adenosine (i(6)A). This is tRNA dimethylallyltransferase from Prochlorococcus marinus (strain MIT 9313).